Consider the following 108-residue polypeptide: Phosphoribosyl-AMP cyclohydrolase (108 aa).

Residue Asp-78 participates in Mg(2+) binding. Cys-79 is a Zn(2+) binding site. Mg(2+) contacts are provided by Asp-80 and Asp-82. Cys-95 and Cys-102 together coordinate Zn(2+).

It belongs to the PRA-CH family. As to quaternary structure, homodimer. Mg(2+) is required as a cofactor. The cofactor is Zn(2+).

It localises to the cytoplasm. The enzyme catalyses 1-(5-phospho-beta-D-ribosyl)-5'-AMP + H2O = 1-(5-phospho-beta-D-ribosyl)-5-[(5-phospho-beta-D-ribosylamino)methylideneamino]imidazole-4-carboxamide. It functions in the pathway amino-acid biosynthesis; L-histidine biosynthesis; L-histidine from 5-phospho-alpha-D-ribose 1-diphosphate: step 3/9. In terms of biological role, catalyzes the hydrolysis of the adenine ring of phosphoribosyl-AMP. This Cenarchaeum symbiosum (strain A) protein is Phosphoribosyl-AMP cyclohydrolase.